Here is a 191-residue protein sequence, read N- to C-terminus: Flavin prenyltransferase UbiX (191 aa).

Residues 13 to 15 (GAS), threonine 39, 90 to 93 (TMKT), and arginine 125 contribute to the FMN site. 2 residues coordinate dimethylallyl phosphate: tyrosine 155 and lysine 171.

It belongs to the UbiX/PAD1 family.

It carries out the reaction dimethylallyl phosphate + FMNH2 = prenylated FMNH2 + phosphate. Flavin prenyltransferase that catalyzes the synthesis of the prenylated FMN cofactor (prenyl-FMN) for 4-hydroxy-3-polyprenylbenzoic acid decarboxylase UbiD. The prenyltransferase is metal-independent and links a dimethylallyl moiety from dimethylallyl monophosphate (DMAP) to the flavin N5 and C6 atoms of FMN. The chain is Flavin prenyltransferase UbiX from Methanothermobacter thermautotrophicus (strain ATCC 29096 / DSM 1053 / JCM 10044 / NBRC 100330 / Delta H) (Methanobacterium thermoautotrophicum).